Reading from the N-terminus, the 117-residue chain is Large ribosomal subunit protein eL34 (117 aa).

Serine 12 carries the phosphoserine modification. 2 positions are modified to N6-acetyllysine: lysine 36 and lysine 43. Residue lysine 108 forms a Glycyl lysine isopeptide (Lys-Gly) (interchain with G-Cter in SUMO2) linkage.

The protein belongs to the eukaryotic ribosomal protein eL34 family. Component of the large ribosomal subunit.

It localises to the cytoplasm. It is found in the cytosol. Its subcellular location is the endoplasmic reticulum. Its function is as follows. Component of the large ribosomal subunit. The ribosome is a large ribonucleoprotein complex responsible for the synthesis of proteins in the cell. This Mus musculus (Mouse) protein is Large ribosomal subunit protein eL34 (Rpl34).